The sequence spans 129 residues: Holo-[acyl-carrier-protein] synthase (129 aa).

Residues aspartate 8 and glutamate 60 each coordinate Mg(2+).

Belongs to the P-Pant transferase superfamily. AcpS family. It depends on Mg(2+) as a cofactor.

Its subcellular location is the cytoplasm. It catalyses the reaction apo-[ACP] + CoA = holo-[ACP] + adenosine 3',5'-bisphosphate + H(+). Its function is as follows. Transfers the 4'-phosphopantetheine moiety from coenzyme A to a Ser of acyl-carrier-protein. This Anaeromyxobacter sp. (strain Fw109-5) protein is Holo-[acyl-carrier-protein] synthase.